We begin with the raw amino-acid sequence, 453 residues long: Transmembrane protease serine 3 (453 aa).

Residues 1-48 lie on the Cytoplasmic side of the membrane; sequence MGENDPPAAEAPFSFRSLFGLDDLKISPVAPDGDAVAAQILSLLPLKF. Residues 49–69 traverse the membrane as a helical; Signal-anchor for type II membrane protein segment; the sequence is FPIIVIGIIALILALAIGLGI. Topologically, residues 70–453 are extracellular; sequence HFDCSGKYRC…HEQLERDLKT (384 aa). Positions 72–108 constitute an LDL-receptor class A domain; that stretch reads DCSGKYRCHSSFKCIELTARCDGVSDCKNAEDEYRCV. Intrachain disulfides connect cysteine 73/cysteine 85, cysteine 79/cysteine 98, cysteine 92/cysteine 107, cysteine 129/cysteine 194, cysteine 142/cysteine 204, cysteine 207/cysteine 324, cysteine 242/cysteine 258, cysteine 338/cysteine 406, cysteine 369/cysteine 385, and cysteine 396/cysteine 424. An SRCR domain is found at 104-205; it reads EYRCVRVSGQ…SGHVVTLKCS (102 aa). Residues 217–448 form the Peptidase S1 domain; sequence IVGGNMSSLT…FLDWIHEQLE (232 aa). Asparagine 221 carries N-linked (GlcNAc...) asparagine glycosylation. Active-site charge relay system residues include histidine 257 and aspartate 304. The Charge relay system role is filled by serine 400.

This sequence belongs to the peptidase S1 family. Undergoes autoproteolytic activation. In terms of tissue distribution, strongly expressed in liver, cochlea, brain, cerebellum, spleen, lung, and muscle and at a lower degree in retina, kidney, and heart. Expressed in the spiral ganglion, the cells supporting the organ of Corti and the stria vascularis. Isoform 2 is strongly expressed only in the cochlea with very faint expression in the cerebellum, spleen and muscle.

It is found in the endoplasmic reticulum membrane. In terms of biological role, probable serine protease that plays a role in hearing. Acts as a permissive factor for cochlear hair cell survival and activation at the onset of hearing and is required for saccular hair cell survival. Activates ENaC (in vitro). This Mus musculus (Mouse) protein is Transmembrane protease serine 3 (Tmprss3).